Consider the following 142-residue polypeptide: Ribosome-binding factor A (142 aa).

Residues 123–142 are disordered; it reads VQRDLDSAPEDDEPETGTGH. A compositionally biased stretch (acidic residues) spans 129–142; it reads SAPEDDEPETGTGH.

This sequence belongs to the RbfA family. In terms of assembly, monomer. Binds 30S ribosomal subunits, but not 50S ribosomal subunits or 70S ribosomes.

It localises to the cytoplasm. Functionally, one of several proteins that assist in the late maturation steps of the functional core of the 30S ribosomal subunit. Associates with free 30S ribosomal subunits (but not with 30S subunits that are part of 70S ribosomes or polysomes). Required for efficient processing of 16S rRNA. May interact with the 5'-terminal helix region of 16S rRNA. The chain is Ribosome-binding factor A from Methylobacterium radiotolerans (strain ATCC 27329 / DSM 1819 / JCM 2831 / NBRC 15690 / NCIMB 10815 / 0-1).